The primary structure comprises 118 residues: Thioredoxin H-type 2 (118 aa).

In terms of domain architecture, Thioredoxin spans 2-113 (AEEGQVIGVH…LQQTIAKHIS (112 aa)). Active-site nucleophile residues include Cys39 and Cys42. A disulfide bridge connects residues Cys39 and Cys42.

The protein belongs to the thioredoxin family. Plant H-type subfamily.

It is found in the cytoplasm. Functionally, participates in various redox reactions through the reversible oxidation of the active center dithiol to a disulfide. The H form is known to activate a number of cytosolic enzymes. The protein is Thioredoxin H-type 2 of Nicotiana tabacum (Common tobacco).